A 578-amino-acid chain; its full sequence is Octopamine receptor 2 (578 aa).

The Extracellular segment spans residues 1-84 (MMSFPIALFA…YDSITIFITV (84 aa)). Residues Asn-13, Asn-38, Asn-46, and Asn-59 are each glycosylated (N-linked (GlcNAc...) asparagine). Residues 85 to 107 (AVVLTLITLWTILGNFFVLMALY) traverse the membrane as a helical segment. At 108 to 117 (RYGTLRTMSN) the chain is on the cytoplasmic side. A helical transmembrane segment spans residues 118–139 (CLIGNLAISDLLLAVTVLPIST). The Extracellular segment spans residues 140 to 156 (VHDLLGYWVFGEFTCTL). A disulfide bridge connects residues Cys-154 and Cys-239. Residues 157–177 (WLCMDVLYCTASIWGLCTVAF) traverse the membrane as a helical segment. Residues 178–197 (DRYLATVYPVWYHDQRSVRK) lie on the Cytoplasmic side of the membrane. The chain crosses the membrane as a helical span at residues 198–220 (AVGCIVFVWIFSIVISFAPFIGW). Over 221–251 (QHMIPSFFSFNASIQRYQCILFTSSSYVLYS) the chain is Extracellular. Asn-231 carries N-linked (GlcNAc...) asparagine glycosylation. The helical transmembrane segment at 252 to 272 (SMGSFVIPAILMAFMYVRIFV) threads the bilayer. Residues 273–495 (VLHNQSRGVK…ELREQRATKR (223 aa)) lie on the Cytoplasmic side of the membrane. The helical transmembrane segment at 496 to 517 (MLLIMACFCVCWMPFLFMYILR) threads the bilayer. The Extracellular portion of the chain corresponds to 518-531 (SVCDTCHMNQHFVA). Residues 532–553 (AIIWLGYVNSSLNPVLYTLFND) form a helical membrane-spanning segment. Topologically, residues 554 to 578 (DFKVAFKRLIGARSPSAYRSPGPRR) are cytoplasmic.

The protein belongs to the G-protein coupled receptor 1 family.

Its subcellular location is the cell membrane. In terms of biological role, receptor for octopamine. Octopamine (OA) is a neurotransmitter, neurohormone, and neuromodulator in invertebrates. This receptor induces a long lasting opening of voltage- independent chloride channels, a process which seems to involve protein phosphorylation but does not require either cAPK or PKC. The rank order of potency for agonists is p-synephrine &gt; p-octopamine &gt; xylometazoline &gt; B-HT920 &gt; norepinephrine = clonidine &gt; epinephrine &gt; p-tyramine &gt; phenylephrine = oxymetazoline = mehoxamine = dopamine &gt; serotonin &gt; histamine. For antagonists, the rank order is rauwolscine = mianserin &gt; phentolamine &gt; chlorpromazine &gt; spiperone &gt; yohimbine &gt; propanolol &gt; alprenolol &gt; prazosine &gt; pindolol. This chain is Octopamine receptor 2, found in Lymnaea stagnalis (Great pond snail).